The following is a 419-amino-acid chain: Ribosomal RNA large subunit methyltransferase G (419 aa).

The segment covering 386–408 has biased composition (basic and acidic residues); sequence KAEPFETHPTEAEAKVEVTESKP. The interval 386–419 is disordered; sequence KAEPFETHPTEAEAKVEVTESKPHPQSSLYGTKK. Residues 409–419 are compositionally biased toward polar residues; that stretch reads HPQSSLYGTKK.

Belongs to the methyltransferase superfamily. RlmG family.

It is found in the cytoplasm. The catalysed reaction is guanosine(1835) in 23S rRNA + S-adenosyl-L-methionine = N(2)-methylguanosine(1835) in 23S rRNA + S-adenosyl-L-homocysteine + H(+). Specifically methylates the guanine in position 1835 (m2G1835) of 23S rRNA. The sequence is that of Ribosomal RNA large subunit methyltransferase G from Shewanella woodyi (strain ATCC 51908 / MS32).